Reading from the N-terminus, the 150-residue chain is uncharacterized protein (150 aa).

The HTH marR-type domain occupies 1 to 133; the sequence is MNDILREIGM…ISALLHRVRK (133 aa). Positions 47 to 70 form a DNA-binding region, H-T-H motif; the sequence is QEKLAEMIKVDRTTAARAIKKLEM.

This is an uncharacterized protein from Bacillus subtilis (strain 168).